We begin with the raw amino-acid sequence, 657 residues long: Glycogen debranching enzyme (657 aa).

Aspartate 336 acts as the Nucleophile in catalysis. The Proton donor role is filled by glutamate 371. Residues 458–467 (NEANGEENRD) are compositionally biased toward basic and acidic residues. The tract at residues 458 to 479 (NEANGEENRDGTNNNYSNNHGK) is disordered.

The protein belongs to the glycosyl hydrolase 13 family.

It catalyses the reaction Hydrolysis of (1-&gt;6)-alpha-D-glucosidic linkages to branches with degrees of polymerization of three or four glucose residues in limit dextrin.. The protein operates within glycan degradation; glycogen degradation. Its function is as follows. Removes maltotriose and maltotetraose chains that are attached by 1,6-alpha-linkage to the limit dextrin main chain, generating a debranched limit dextrin. This is Glycogen debranching enzyme from Escherichia coli (strain K12 / DH10B).